Reading from the N-terminus, the 354-residue chain is Uroporphyrinogen decarboxylase (354 aa).

Substrate contacts are provided by residues 25–29, Phe44, Asp75, Tyr152, Thr207, and His330; that span reads RQAGR.

It belongs to the uroporphyrinogen decarboxylase family. As to quaternary structure, homodimer.

The protein resides in the cytoplasm. The enzyme catalyses uroporphyrinogen III + 4 H(+) = coproporphyrinogen III + 4 CO2. It functions in the pathway porphyrin-containing compound metabolism; protoporphyrin-IX biosynthesis; coproporphyrinogen-III from 5-aminolevulinate: step 4/4. In terms of biological role, catalyzes the decarboxylation of four acetate groups of uroporphyrinogen-III to yield coproporphyrinogen-III. In Xanthomonas axonopodis pv. citri (strain 306), this protein is Uroporphyrinogen decarboxylase.